A 164-amino-acid polypeptide reads, in one-letter code: UPF0251 protein MM_1448 (164 aa).

The segment covering 91–100 (GDYRMPRGDR) has biased composition (basic and acidic residues). The disordered stretch occupies residues 91 to 123 (GDYRMPRGDRTGPAGQGPAGGGRGRGQGKGRGG). The span at 104-115 (AGQGPAGGGRGR) shows a compositional bias: gly residues.

It belongs to the UPF0251 family.

This Methanosarcina mazei (strain ATCC BAA-159 / DSM 3647 / Goe1 / Go1 / JCM 11833 / OCM 88) (Methanosarcina frisia) protein is UPF0251 protein MM_1448.